Here is a 78-residue protein sequence, read N- to C-terminus: MAAHCQVTGAEPGFGHSISHSHRRNKRRFDPNIQKKRYWVPSLRRNVTLTLSARGIKTIDVRGIDSVVADILARGVKL.

Residues 1 to 31 (MAAHCQVTGAEPGFGHSISHSHRRNKRRFDP) are disordered.

It belongs to the bacterial ribosomal protein bL28 family.

This chain is Large ribosomal subunit protein bL28, found in Paenarthrobacter aurescens (strain TC1).